Reading from the N-terminus, the 339-residue chain is DNA-directed RNA polymerase subunit alpha (339 aa).

The tract at residues 1–235 (MVREEVAVST…DLFIPFLHGE (235 aa)) is alpha N-terminal domain (alpha-NTD). The tract at residues 267–339 (KAIALECIFI…FTIDLPKNKF (73 aa)) is alpha C-terminal domain (alpha-CTD).

Belongs to the RNA polymerase alpha chain family. In plastids the minimal PEP RNA polymerase catalytic core is composed of four subunits: alpha, beta, beta', and beta''. When a (nuclear-encoded) sigma factor is associated with the core the holoenzyme is formed, which can initiate transcription.

The protein resides in the plastid. It localises to the chloroplast. The catalysed reaction is RNA(n) + a ribonucleoside 5'-triphosphate = RNA(n+1) + diphosphate. Its function is as follows. DNA-dependent RNA polymerase catalyzes the transcription of DNA into RNA using the four ribonucleoside triphosphates as substrates. This Drimys granadensis protein is DNA-directed RNA polymerase subunit alpha.